A 439-amino-acid polypeptide reads, in one-letter code: Microfibrillar-associated protein 1 (439 aa).

Disordered stretches follow at residues 1–27 (MSVP…NEKG) and 39–200 (YVSG…PRLK). At Ser2 the chain carries N-acetylserine. Ser52 and Ser53 each carry phosphoserine. Residues 61 to 70 (QFIKKAKEQE) show a composition bias toward basic and acidic residues. A Glycyl lysine isopeptide (Lys-Gly) (interchain with G-Cter in SUMO2) cross-link involves residue Lys67. The segment covering 71–81 (AEPEEQEEDSS) has biased composition (acidic residues). Phosphoserine is present on residues Ser94, Ser116, Ser118, Ser132, and Ser133. Composition is skewed to acidic residues over residues 112 to 122 (VVGESDSEVEG) and 131 to 144 (DSSE…DDEE). Residues 145–163 (IERRRGMMRQRAQERKNEE) are compositionally biased toward basic and acidic residues. Acidic residues predominate over residues 178-195 (ESESESEYEEYTDSEDEM). Lys249 participates in a covalent cross-link: Glycyl lysine isopeptide (Lys-Gly) (interchain with G-Cter in SUMO2). Thr267 carries the phosphothreonine modification. Lys357 participates in a covalent cross-link: Glycyl lysine isopeptide (Lys-Gly) (interchain with G-Cter in SUMO2). Ser361 is subject to Phosphoserine. Residues Lys371, Lys381, Lys415, and Lys418 each participate in a glycyl lysine isopeptide (Lys-Gly) (interchain with G-Cter in SUMO2) cross-link. Ser432 bears the Phosphoserine mark.

It belongs to the MFAP1 family. In terms of assembly, component of the spliceosome B complex. Interacts with PRPF38A (via N-terminal interaction domain).

Its subcellular location is the nucleus. Involved in pre-mRNA splicing as a component of the spliceosome. The polypeptide is Microfibrillar-associated protein 1 (Homo sapiens (Human)).